We begin with the raw amino-acid sequence, 558 residues long: Dihydroxy-acid dehydratase (558 aa).

Residue cysteine 50 coordinates [2Fe-2S] cluster. Aspartate 82 provides a ligand contact to Mg(2+). Cysteine 123 contacts [2Fe-2S] cluster. Mg(2+)-binding residues include aspartate 124 and lysine 125. Lysine 125 is modified (N6-carboxylysine). Cysteine 195 serves as a coordination point for [2Fe-2S] cluster. Glutamate 447 is a Mg(2+) binding site. The active-site Proton acceptor is serine 472.

The protein belongs to the IlvD/Edd family. Homodimer. [2Fe-2S] cluster is required as a cofactor. Mg(2+) serves as cofactor.

It catalyses the reaction (2R)-2,3-dihydroxy-3-methylbutanoate = 3-methyl-2-oxobutanoate + H2O. It carries out the reaction (2R,3R)-2,3-dihydroxy-3-methylpentanoate = (S)-3-methyl-2-oxopentanoate + H2O. It functions in the pathway amino-acid biosynthesis; L-isoleucine biosynthesis; L-isoleucine from 2-oxobutanoate: step 3/4. It participates in amino-acid biosynthesis; L-valine biosynthesis; L-valine from pyruvate: step 3/4. Functionally, functions in the biosynthesis of branched-chain amino acids. Catalyzes the dehydration of (2R,3R)-2,3-dihydroxy-3-methylpentanoate (2,3-dihydroxy-3-methylvalerate) into 2-oxo-3-methylpentanoate (2-oxo-3-methylvalerate) and of (2R)-2,3-dihydroxy-3-methylbutanoate (2,3-dihydroxyisovalerate) into 2-oxo-3-methylbutanoate (2-oxoisovalerate), the penultimate precursor to L-isoleucine and L-valine, respectively. The chain is Dihydroxy-acid dehydratase from Saccharolobus islandicus (strain L.S.2.15 / Lassen #1) (Sulfolobus islandicus).